We begin with the raw amino-acid sequence, 191 residues long: MQLNELNCVILCGGKSSRMGQDKSKLILKNQNLTQFQVNKFSKIFKNVYVSAKEDKFENHFNLIKDSLEFEVYSPMLALYSILSNFKNEFVFVLSVDSPKVGENELLKMLPFLEQNYKIIIAKTPLHKHPLCGFYHSSLAQTCKNFLEKNEQKIGFLFSEIKTKFVEFENEDAFLNLNFYEEYEKFKSELK.

Residues 11-13, lysine 23, aspartate 66, and aspartate 97 contribute to the GTP site; that span reads LCG. Aspartate 97 serves as a coordination point for Mg(2+).

It belongs to the MobA family. Monomer. Mg(2+) serves as cofactor.

It is found in the cytoplasm. It carries out the reaction Mo-molybdopterin + GTP + H(+) = Mo-molybdopterin guanine dinucleotide + diphosphate. Transfers a GMP moiety from GTP to Mo-molybdopterin (Mo-MPT) cofactor (Moco or molybdenum cofactor) to form Mo-molybdopterin guanine dinucleotide (Mo-MGD) cofactor. The sequence is that of Molybdenum cofactor guanylyltransferase from Campylobacter jejuni subsp. doylei (strain ATCC BAA-1458 / RM4099 / 269.97).